The sequence spans 345 residues: AA9 family lytic polysaccharide monooxygenase D (345 aa).

Residues 1-21 (MPSFTSKTLLAALAGAAAVNA) form the signal peptide. Cu(2+) contacts are provided by His-22 and His-107. Cysteines 77 and 200 form a disulfide. N-linked (GlcNAc...) asparagine glycosylation occurs at Asn-160. O2-binding residues include His-186 and Gln-195. Position 197 (Tyr-197) interacts with Cu(2+). The interval 315-345 (VQTSTRPISTRPQPTRCPGLGRRHLRKVARA) is disordered. The span at 318–327 (STRPISTRPQ) shows a compositional bias: polar residues. The span at 335-345 (GRRHLRKVARA) shows a compositional bias: basic residues.

Belongs to the polysaccharide monooxygenase AA9 family. It depends on Cu(2+) as a cofactor.

The protein localises to the secreted. The catalysed reaction is [(1-&gt;4)-beta-D-glucosyl]n+m + reduced acceptor + O2 = 4-dehydro-beta-D-glucosyl-[(1-&gt;4)-beta-D-glucosyl]n-1 + [(1-&gt;4)-beta-D-glucosyl]m + acceptor + H2O.. Lytic polysaccharide monooxygenase (LPMO) that depolymerizes crystalline and amorphous polysaccharides via the oxidation of scissile alpha- or beta-(1-4)-glycosidic bonds, yielding C1 or C4 oxidation products. Catalysis by LPMOs requires the reduction of the active-site copper from Cu(II) to Cu(I) by a reducing agent and H(2)O(2) or O(2) as a cosubstrate. This Podospora anserina (strain S / ATCC MYA-4624 / DSM 980 / FGSC 10383) (Pleurage anserina) protein is AA9 family lytic polysaccharide monooxygenase D.